Reading from the N-terminus, the 223-residue chain is NAD(P)H-hydrate epimerase (223 aa).

A YjeF N-terminal domain is found at 9-211 (AIKLDEELMG…ELKDKLHLIL (203 aa)). Position 60-64 (60-64 (NNGGD)) interacts with (6S)-NADPHX. Residues Asn61 and Asp120 each coordinate K(+). Residues 124-130 (GFSFKGP) and Asp153 each bind (6S)-NADPHX. Ser156 contributes to the K(+) binding site.

This sequence belongs to the NnrE/AIBP family. K(+) serves as cofactor.

It catalyses the reaction (6R)-NADHX = (6S)-NADHX. The enzyme catalyses (6R)-NADPHX = (6S)-NADPHX. In terms of biological role, catalyzes the epimerization of the S- and R-forms of NAD(P)HX, a damaged form of NAD(P)H that is a result of enzymatic or heat-dependent hydration. This is a prerequisite for the S-specific NAD(P)H-hydrate dehydratase to allow the repair of both epimers of NAD(P)HX. In Entamoeba histolytica (strain ATCC 30459 / HM-1:IMSS / ABRM), this protein is NAD(P)H-hydrate epimerase.